The primary structure comprises 122 residues: Large ribosomal subunit protein bL20 (122 aa).

This sequence belongs to the bacterial ribosomal protein bL20 family.

In terms of biological role, binds directly to 23S ribosomal RNA and is necessary for the in vitro assembly process of the 50S ribosomal subunit. It is not involved in the protein synthesizing functions of that subunit. The polypeptide is Large ribosomal subunit protein bL20 (Saccharopolyspora erythraea (strain ATCC 11635 / DSM 40517 / JCM 4748 / NBRC 13426 / NCIMB 8594 / NRRL 2338)).